Consider the following 691-residue polypeptide: T-box transcription factor TBX2-B (691 aa).

A DNA-binding region (T-box) is located at residues 104 to 277; that stretch reads LWDQFHKIGT…HNPFAKGFRD (174 aa). Disordered stretches follow at residues 301-440 and 612-691; these read CKAD…SLSK and NLLT…ESPK. The segment covering 325-335 has biased composition (low complexity); the sequence is HSPLSAAPSPL. Composition is skewed to basic and acidic residues over residues 340–361, 378–402, and 415–433; these read TNRE…EVRS, RLED…RKDG, and SLEK…KSDP. The span at 624–639 shows a compositional bias: low complexity; that stretch reads PGSESSKPGSSRESSP. Positions 659 to 684 form a coiled coil; it reads SMKDSINELQRIQRLVSGLERQREVS. Over residues 678–691 the composition is skewed to basic and acidic residues; sequence ERQREVSPGRESPK.

In terms of assembly, binds DNA as a monomer.

It localises to the nucleus. Transcription factor which acts as a transcriptional repressor. May also function as a transcriptional activator. Binds to the palindromic T site 5'-TTCACACCTAGGTGTGAA-3' DNA sequence, or a half-site, which are present in the regulatory region of several genes. The polypeptide is T-box transcription factor TBX2-B (tbx2-b) (Xenopus laevis (African clawed frog)).